Here is a 197-residue protein sequence, read N- to C-terminus: MARFAVLQLLLPLAAGLTGASFPAQIPTILEEPDTPHYAVHHTVVSASSLSESLKFYVDGLGLDIIRNYNFQGDLTTLFGTNTSVLPGYFLGDTTSVYNGTDGVIYLVEFPDAKKIPTDESDPPNTGLFLTSFWMGDKLNATLDRLDRLGMGGKPHIATFSFGSEPLATYATVRDPDGARVLLVSRPYINSIGKQRP.

A signal peptide spans 1–19 (MARFAVLQLLLPLAAGLTG). N-linked (GlcNAc...) asparagine glycosylation is found at N82, N99, and N140.

This sequence belongs to the glyoxalase I family.

In terms of biological role, lactoylglutathione lyase-like protein; part of the gene cluster that mediates the biosynthesis of terrein, a fungal metabolite with ecological, antimicrobial, antiproliferative, and antioxidative activities. The first step in the pathway is performed by the polyketide synthase terA that produces 4-hydroxy-6-methylpyranon (4-HMP), orsellinic acid (OA), and 2,3-dehydro-6-hydroxymellein (2,3-dehydro-6-HM) by condensing acetyl-CoA with two, three, or four malonyl-CoA units, respectively. 4-HMP and OA are not pathway intermediates, but are rather shunt or side products. 2,3-dehydro-6-HM is further converted to 6-hydroxymellein (6-HM) by the 6-hydroxymellein synthase terB. The monooxygenases terC and terD, the multicopper oxidase terE and the Kelch-like protein terF are then involved in the transformation of 6-HM to terrein. Even if they are co-regulated with the other terrein cluster genes, terH and terI seem to be dispensable for terrein production; whereas one or both of the 2 transporters terG and terJ are probably required for efficient secretion of metabolites. This chain is Lactoylglutathione lyase-like protein terB, found in Aspergillus terreus (strain NIH 2624 / FGSC A1156).